A 291-amino-acid chain; its full sequence is MIIIGGSATNGIDESLSKILSIPLVKVENKIFPDGESYIRVPSSIRDEEVLLVQTTDYPQDKHLIELFLIAETIRDLGAKKLTAIVPYLAYSRQDRRFKDGEAISIKTILHILSEVGVNTLVVVEPHKPEELSYFKGELKIVHPYHQIARKIKEIIEDPFILAPDRGALDRARKIAEEINAPYSYIEKERDRTTGEVRIKEAPNINLKGKDVVIIDDIISTGGTIVQATRLAYSLGAKSVTAAAIHLLLVGGAKERLREVGVKTLIGTNTINVNDKDIITIDVSQSIALSL.

Residues 34–36 (DGE) and 93–94 (RQ) each bind ATP. Positions 127 and 165 each coordinate Mg(2+). Residue Lys-188 is part of the active site. Residues Arg-190, Asp-216, and 220–224 (STGGT) contribute to the D-ribose 5-phosphate site.

It belongs to the ribose-phosphate pyrophosphokinase family. Class III (archaeal) subfamily. As to quaternary structure, homodimer. The cofactor is Mg(2+).

It localises to the cytoplasm. It carries out the reaction D-ribose 5-phosphate + ATP = 5-phospho-alpha-D-ribose 1-diphosphate + AMP + H(+). Its pathway is metabolic intermediate biosynthesis; 5-phospho-alpha-D-ribose 1-diphosphate biosynthesis; 5-phospho-alpha-D-ribose 1-diphosphate from D-ribose 5-phosphate (route I): step 1/1. Functionally, involved in the biosynthesis of the central metabolite phospho-alpha-D-ribosyl-1-pyrophosphate (PRPP) via the transfer of pyrophosphoryl group from ATP to 1-hydroxyl of ribose-5-phosphate (Rib-5-P). In Saccharolobus solfataricus (strain ATCC 35092 / DSM 1617 / JCM 11322 / P2) (Sulfolobus solfataricus), this protein is Ribose-phosphate pyrophosphokinase.